The chain runs to 512 residues: Putative ribose/galactose/methyl galactoside import ATP-binding protein 2 (512 aa).

2 consecutive ABC transporter domains span residues 14 to 251 and 262 to 507; these read IALT…VGRQ and TSGN…TQRE. Residue 46–53 participates in ATP binding; that stretch reads GENGAGKS.

This sequence belongs to the ABC transporter superfamily. Carbohydrate importer 2 (CUT2) (TC 3.A.1.2) family.

The protein localises to the cell inner membrane. It catalyses the reaction D-ribose(out) + ATP + H2O = D-ribose(in) + ADP + phosphate + H(+). The enzyme catalyses D-galactose(out) + ATP + H2O = D-galactose(in) + ADP + phosphate + H(+). Its function is as follows. Part of an ABC transporter complex involved in carbohydrate import. Could be involved in ribose, galactose and/or methyl galactoside import. Responsible for energy coupling to the transport system. This is Putative ribose/galactose/methyl galactoside import ATP-binding protein 2 from Burkholderia cenocepacia (strain HI2424).